An 870-amino-acid chain; its full sequence is DNA mismatch repair protein MutS (870 aa).

622 to 629 (GPNMGGKS) serves as a coordination point for ATP.

Belongs to the DNA mismatch repair MutS family.

Its function is as follows. This protein is involved in the repair of mismatches in DNA. It is possible that it carries out the mismatch recognition step. This protein has a weak ATPase activity. The protein is DNA mismatch repair protein MutS of Methylibium petroleiphilum (strain ATCC BAA-1232 / LMG 22953 / PM1).